The following is a 155-amino-acid chain: MRVGIGYDVHKLVENRKLILGGVEIQYSKGLLGHSDADVLVHAIIDSILGAAGLGDIGKLFPDSDNKYKGISSLKLLKEVNALIKDKGYKIGNIDSTIIAQKPKISPYIEDIKKSLCNVLDIDLGSINIKATTEEGLGFTGRGEGISSQSICLLI.

Residues D8 and H10 each coordinate a divalent metal cation. Residues 8 to 10 (DVH) and 34 to 35 (HS) contribute to the 4-CDP-2-C-methyl-D-erythritol 2-phosphate site. H42 is a binding site for a divalent metal cation. 4-CDP-2-C-methyl-D-erythritol 2-phosphate contacts are provided by residues 56–58 (DIG), 61–65 (FPDSD), 132–135 (TTEE), F139, and R142.

The protein belongs to the IspF family. Homotrimer. The cofactor is a divalent metal cation.

The catalysed reaction is 4-CDP-2-C-methyl-D-erythritol 2-phosphate = 2-C-methyl-D-erythritol 2,4-cyclic diphosphate + CMP. It functions in the pathway isoprenoid biosynthesis; isopentenyl diphosphate biosynthesis via DXP pathway; isopentenyl diphosphate from 1-deoxy-D-xylulose 5-phosphate: step 4/6. Involved in the biosynthesis of isopentenyl diphosphate (IPP) and dimethylallyl diphosphate (DMAPP), two major building blocks of isoprenoid compounds. Catalyzes the conversion of 4-diphosphocytidyl-2-C-methyl-D-erythritol 2-phosphate (CDP-ME2P) to 2-C-methyl-D-erythritol 2,4-cyclodiphosphate (ME-CPP) with a corresponding release of cytidine 5-monophosphate (CMP). The chain is 2-C-methyl-D-erythritol 2,4-cyclodiphosphate synthase from Clostridium acetobutylicum (strain ATCC 824 / DSM 792 / JCM 1419 / IAM 19013 / LMG 5710 / NBRC 13948 / NRRL B-527 / VKM B-1787 / 2291 / W).